The primary structure comprises 780 residues: Lethal(3)malignant brain tumor-like protein 3 (780 aa).

The tract at residues 1–64 (MTESASSTSG…VKKATATTTW (64 aa)) is interaction with RBPJ. Required for transcription repressor activity on Notch target genes. Residues 149–220 (DKDQKEERDV…RKRRGDSAVL (72 aa)) are disordered. Acidic residues-rich tracts occupy residues 157–166 (DVEEDNEEED) and 185–194 (EDGEERDDEM). 3 MBT repeats span residues 232–332 (WCWA…LHPP), 340–439 (FNWQ…LITP), and 448–543 (FSWD…LQPP). The segment at 549-593 (LMEASEHGGCSTPGCKGIGHFKRARHLGPHSAANCPYSEINLNKD) adopts a CCHHC-type; degenerate zinc-finger fold. The tract at residues 597–665 (PDRLSGEMPP…GAREEPTVQQ (69 aa)) is disordered. The interval 600–710 (LSGEMPPASP…PASKVSKWST (111 aa)) is interaction with DCAF5. Serine 608 carries the post-translational modification Phosphoserine. Residue lysine 637 forms a Glycyl lysine isopeptide (Lys-Gly) (interchain with G-Cter in SUMO2) linkage. The segment covering 643-661 (RTESEMRTSHEARGAREEP) has biased composition (basic and acidic residues). Residue lysine 704 forms a Glycyl lysine isopeptide (Lys-Gly) (interchain with G-Cter in SUMO2) linkage. Positions 708-772 (WSTDEVSEFI…FNSILMFKAA (65 aa)) constitute an SAM domain.

In terms of assembly, interacts with RNF2. Interacts (via SAM domain) with SAMD1 (via SAM domain); the interaction mediates L3MBTL3 binding to chromatin. Interacts with RBPJ; the interaction is required for L3MBTL3 localization to chromatin and is impaired by Notch-derived peptides containing the intracellular domain (NICD). Interacts (via SAM domain) with KDM1A. Interacts with DCAF5. Interacts with DNMT1. Interacts with E2F1. Interacts with SOX2. Interacts with SFMBT1.

The protein localises to the nucleus. Is a negative regulator of Notch target genes expression, required for RBPJ-mediated transcriptional repression. It recruits KDM1A to Notch-responsive elements and promotes KDM1A-mediated H3K4me demethylation. Involved in the regulation of ubiquitin-dependent degradation of a set of methylated non-histone proteins, including SOX2, DNMT1 and E2F1. It acts as an adapter recruiting the CRL4-DCAF5 E3 ubiquitin ligase complex to methylated target proteins. Required for normal maturation of myeloid progenitor cells. The polypeptide is Lethal(3)malignant brain tumor-like protein 3 (Homo sapiens (Human)).